Here is a 72-residue protein sequence, read N- to C-terminus: Cytochrome c oxidase copper chaperone 2 (72 aa).

2 residues coordinate Cu cation: cysteine 32 and cysteine 33. A CHCH domain is found at 32 to 72; sequence CCACPDTKKLRDECIVEHGESACTKWIEAHILCLRSEGFKV. 2 consecutive short sequence motifs (cx9C motif) follow at residues 35 to 45 and 54 to 64; these read CPDTKKLRDEC and CTKWIEAHILC. Cystine bridges form between cysteine 35–cysteine 64 and cysteine 45–cysteine 54.

This sequence belongs to the COX17 family.

It localises to the mitochondrion intermembrane space. Functionally, copper chaperone for cytochrome c oxidase (COX). Binds 2 copper ions and delivers them to the Cu(A) site of COX. This Arabidopsis thaliana (Mouse-ear cress) protein is Cytochrome c oxidase copper chaperone 2 (COX17-2).